The primary structure comprises 544 residues: Methionine--tRNA ligase (544 aa).

Positions 10 to 20 (PYANGSLHLGH) match the 'HIGH' region motif. Positions 141, 144, 153, and 156 each coordinate Zn(2+). Residues 329 to 333 (KLSTS) carry the 'KMSKS' region motif. Thr332 contacts ATP.

The protein belongs to the class-I aminoacyl-tRNA synthetase family. MetG type 1 subfamily. Monomer. It depends on Zn(2+) as a cofactor.

The protein localises to the cytoplasm. It catalyses the reaction tRNA(Met) + L-methionine + ATP = L-methionyl-tRNA(Met) + AMP + diphosphate. Its function is as follows. Is required not only for elongation of protein synthesis but also for the initiation of all mRNA translation through initiator tRNA(fMet) aminoacylation. In Bacillus cereus (strain B4264), this protein is Methionine--tRNA ligase.